A 319-amino-acid polypeptide reads, in one-letter code: MARKKIALVGAGQIGGTLALLAGQKELGDIVLLDIPDAEGVAKGKALDIAEASPVEGFDAGYTGTSNYADLAGADVVIVTAGVPRKPGMSRDDLVGINARIIKAVGEGIRTHAPDAFVIVITNPLDAMVGLMQQVTGFDPAKVVGMAGVLDSARFRWFLAEEFKVSVEDVTAFVLGGHGDTMVPSVRYSTVAGIPLPDLVKMGWTTQEKLDQIVQRTRDGGAEIVGLLKTGSAFYAPAASAIAMAESYLKDKKRVMPCAARLTGQYGVDGLYIGVPVVIGAGGVEKIVEIELNAEEQAMFDKSVAAVKSLVEVTAKVAG.

Residues 10-15 and Asp34 contribute to the NAD(+) site; that span reads GAGQIG. The substrate site is built by Arg85 and Arg91. Residues Asn98 and 121–123 each bind NAD(+); that span reads ITN. The substrate site is built by Asn123 and Arg154. Catalysis depends on His178, which acts as the Proton acceptor.

The protein belongs to the LDH/MDH superfamily. MDH type 3 family.

The enzyme catalyses (S)-malate + NAD(+) = oxaloacetate + NADH + H(+). Functionally, catalyzes the reversible oxidation of malate to oxaloacetate. This Rhodospirillum centenum (strain ATCC 51521 / SW) protein is Malate dehydrogenase.